Consider the following 180-residue polypeptide: ATP-dependent Clp protease proteolytic subunit 2 (180 aa).

Ser-86 serves as the catalytic Nucleophile. His-111 is a catalytic residue.

Belongs to the peptidase S14 family. As to quaternary structure, fourteen ClpP subunits assemble into 2 heptameric rings which stack back to back to give a disk-like structure with a central cavity, resembling the structure of eukaryotic proteasomes.

Its subcellular location is the cytoplasm. It catalyses the reaction Hydrolysis of proteins to small peptides in the presence of ATP and magnesium. alpha-casein is the usual test substrate. In the absence of ATP, only oligopeptides shorter than five residues are hydrolyzed (such as succinyl-Leu-Tyr-|-NHMec, and Leu-Tyr-Leu-|-Tyr-Trp, in which cleavage of the -Tyr-|-Leu- and -Tyr-|-Trp bonds also occurs).. In terms of biological role, cleaves peptides in various proteins in a process that requires ATP hydrolysis. Has a chymotrypsin-like activity. Plays a major role in the degradation of misfolded proteins. The polypeptide is ATP-dependent Clp protease proteolytic subunit 2 (Tropheryma whipplei (strain Twist) (Whipple's bacillus)).